We begin with the raw amino-acid sequence, 868 residues long: Facilitated trehalose transporter Tret1 (868 aa).

2 disordered regions span residues 1–213 (MSGR…QKAT) and 257–314 (KESS…LIHR). Residues 1–403 (MSGRDNRGAG…VYRPTTNPIY (403 aa)) lie on the Cytoplasmic side of the membrane. Over residues 25–43 (KLKEKLTRAGDDQGYHRVE) the composition is skewed to basic and acidic residues. Low complexity-rich tracts occupy residues 44–57 (SNLS…SLDT), 79–91 (PQQQ…QQLR), and 117–126 (PFQQQQQRTP). 2 stretches are compositionally biased toward basic and acidic residues: residues 146-155 (EIREHRDRQQ) and 257-290 (KESS…KLDK). Residues Ser259, Ser260, Ser261, Ser331, and Ser333 each carry the phosphoserine modification. Positions 335–367 (EDFHTSRQHFQQQRSISTDSRKSRRPYEMDEMG) are disordered. The segment covering 342–352 (QHFQQQRSIST) has biased composition (polar residues). Positions 353–367 (DSRKSRRPYEMDEMG) are enriched in basic and acidic residues. A helical transmembrane segment spans residues 404-424 (IWTQVLAALSVSLGSLVVGFV). The Extracellular segment spans residues 425-451 (SAYTSPALVSMTNRNMTSFEVTPQAAS). The N-linked (GlcNAc...) asparagine glycan is linked to Asn439. The helical transmembrane segment at 452-472 (WVGGIMPLAGLAGGIAGGPFI) threads the bilayer. Residues 473 to 484 (EYLGRRNTILAT) lie on the Cytoplasmic side of the membrane. The chain crosses the membrane as a helical span at residues 485 to 505 (AIPFIVSSLLIACAVNVAMVL). The Extracellular segment spans residues 506–508 (AGR). A helical membrane pass occupies residues 509 to 529 (FLAGFCVGIASLSLPVYLGET). The Cytoplasmic segment spans residues 530 to 535 (VQPEVR). Residues 536-556 (GTLGLLPTAFGNIGILLCFVA) traverse the membrane as a helical segment. Over 557–563 (GTYMDWS) the chain is Extracellular. The chain crosses the membrane as a helical span at residues 564–584 (MLAFLGAALPVPFLILMFLIP). At 585–653 (ETPRWFVSRG…NLKPLSISLG (69 aa)) the chain is on the cytoplasmic side. A helical membrane pass occupies residues 654-674 (LMFFQQLSGINAVIFYTVSIF). Residues 675-684 (KDAGSTIDGN) are Extracellular-facing. A helical membrane pass occupies residues 685 to 705 (LCTIIVGIVNFMATFIATLLI). Over 706-711 (DRAGRK) the chain is Cytoplasmic. The helical transmembrane segment at 712 to 732 (ILLYVSNIAMIITLFVLGGFF) threads the bilayer. Residues 733 to 751 (YCKSHGQDVSQLGWLPLSC) lie on the Extracellular side of the membrane. A helical membrane pass occupies residues 752–772 (FVIYILGFSLGFGPIPWLMMG). Topologically, residues 773 to 778 (EILPSK) are cytoplasmic. A helical transmembrane segment spans residues 779-799 (IRGSAASVATAFNWSCTFVVT). The Extracellular segment spans residues 800–812 (KTFQDMIDFMGAH). A helical membrane pass occupies residues 813 to 833 (GAFWLFGSICFIGLFFVILYV). Over 834-868 (PETQGKTLEDIERKMMGRVRRMSSVANMKPLAFNM) the chain is Cytoplasmic. A phosphoserine mark is found at Ser856 and Ser857.

Belongs to the major facilitator superfamily. Sugar transporter (TC 2.A.1.1) family. Trehalose transporter subfamily.

It localises to the cell membrane. Functionally, low-capacity facilitative transporter for trehalose. Does not transport maltose, sucrose or lactose. Mediates the bidirectional transfer of trehalose. Responsible for the transport of trehalose synthesized in the fat body and the incorporation of trehalose into other tissues that require a carbon source, thereby regulating trehalose levels in the hemolymph. In Drosophila pseudoobscura pseudoobscura (Fruit fly), this protein is Facilitated trehalose transporter Tret1.